The primary structure comprises 1381 residues: Hepatocyte growth factor receptor (1381 aa).

Positions 1 to 24 (MKAPAVLAPGILMLLFTLVQRSNG) are cleaved as a signal peptide. At 25–932 (ECKEALAKSE…VIVQPDQNFT (908 aa)) the chain is on the extracellular side. Positions 27-515 (KEALAKSEMN…TGKKITKIPL (489 aa)) constitute a Sema domain. Residue N45 is glycosylated (N-linked (GlcNAc...) asparagine). 4 cysteine pairs are disulfide-bonded: C95–C101, C98–C160, C133–C141, and C172–C175. N-linked (GlcNAc...) asparagine glycosylation occurs at N106. An N-linked (GlcNAc...) asparagine glycan is attached at N149. N202 is a glycosylation site (N-linked (GlcNAc...) asparagine). Intrachain disulfides connect C298/C363 and C385/C397. 2 N-linked (GlcNAc...) asparagine glycosylation sites follow: N399 and N405. Cystine bridges form between C520–C538, C526–C561, C529–C545, and C541–C551. IPT/TIG domains follow at residues 563 to 655 (PAIY…FSYV), 657 to 739 (PIIT…FSYR), and 742 to 836 (PIVY…LIYV). A glycan (O-linked (Man) threonine) is linked at T582. N607 and N635 each carry an N-linked (GlcNAc...) asparagine glycan. Residues T676 and T761 are each glycosylated (O-linked (Man) threonine). N785, N879, and N930 each carry an N-linked (GlcNAc...) asparagine glycan. A helical transmembrane segment spans residues 933 to 955 (GLIAGVVSISIALLLLLGLFLWL). Residues 956–1381 (KKRKQIKDLG…EDNADDEVDT (426 aa)) lie on the Cytoplasmic side of the membrane. Residue S966 is modified to Phosphoserine. Residue T977 is modified to Phosphothreonine. Phosphoserine is present on residues S990, S997, and S1000. Y1003 bears the Phosphotyrosine mark. The Protein kinase domain maps to 1078–1345 (VHFNEVIGRG…RISAIFSTFI (268 aa)). ATP-binding positions include 1084 to 1092 (IGRGHFGCV) and K1110. D1204 serves as the catalytic Proton acceptor. An interaction with RANBP9 region spans residues 1212–1381 (LDEKFTVKVA…EDNADDEVDT (170 aa)). Phosphotyrosine is present on Y1230. Residues Y1234 and Y1235 each carry the phosphotyrosine; by autocatalysis modification. T1289 bears the Phosphothreonine mark. Residues 1320-1359 (WHPKAEMRPSFSELVSRISAIFSTFIGEHYVHVNATYVNV) form an interaction with MUC20 region. Phosphotyrosine; by autocatalysis is present on residues Y1349 and Y1356. At Y1365 the chain carries Phosphotyrosine.

It belongs to the protein kinase superfamily. Tyr protein kinase family. In terms of assembly, heterodimer made of an alpha chain (50 kDa) and a beta chain (145 kDa) which are disulfide linked. Binds PLXNB1. Interacts when phosphorylated with downstream effectors including STAT3, PIK3R1, SRC, PCLG1, GRB2 and GAB1. Interacts with SPSB1, SPSB2 and SPSB4. Interacts with INPP5D/SHIP1. When phosphorylated at Tyr-1356, interacts with INPPL1/SHIP2. Interacts with RANBP9 and RANBP10, as well as SPSB1, SPSB2, SPSB3 and SPSB4. SPSB1 binding occurs in the presence and in the absence of HGF, however HGF treatment has a positive effect on this interaction. Interacts with MUC20; prevents interaction with GRB2 and suppresses hepatocyte growth factor-induced cell proliferation. Interacts with GRB10. Interacts with PTPN1 and PTPN2. Interacts with HSP90AA1 and HSP90AB1; the interaction suppresses MET kinase activity. Interacts with tensin TNS3. Interacts (when phosphorylated) with tensin TNS4 (via SH2 domain); the interaction increases MET protein stability by inhibiting MET endocytosis and subsequent lysosomal degradation. (Microbial infection) Immunoprecipitates with L.monocytogenes InlB. InlB probably dimerizes upon binding to MET, which encourages subsequent dimerization of MET. In terms of processing, autophosphorylated in response to ligand binding on Tyr-1234 and Tyr-1235 in the kinase domain leading to further phosphorylation of Tyr-1349 and Tyr-1356 in the C-terminal multifunctional docking site. Dephosphorylated by PTPRJ at Tyr-1349 and Tyr-1365. Dephosphorylated by PTPN1 and PTPN2. Ubiquitinated. Ubiquitination by CBL regulates the receptor stability and activity through proteasomal degradation. Post-translationally, O-mannosylation of IPT/TIG domains by TMEM260 is required for protein maturation. O-mannosylated residues are composed of single mannose glycans that are not elongated or modified. In terms of processing, (Microbial infection) Tyrosine phosphorylation is stimulated by L.monocytogenes InlB.

The protein localises to the membrane. It carries out the reaction L-tyrosyl-[protein] + ATP = O-phospho-L-tyrosyl-[protein] + ADP + H(+). In its inactive state, the C-terminal tail interacts with the catalytic domain and inhibits the kinase activity. Upon ligand binding, the C-terminal tail is displaced and becomes phosphorylated, thus increasing the kinase activity. In terms of biological role, receptor tyrosine kinase that transduces signals from the extracellular matrix into the cytoplasm by binding to hepatocyte growth factor/HGF ligand. Regulates many physiological processes including proliferation, scattering, morphogenesis and survival. Ligand binding at the cell surface induces autophosphorylation of MET on its intracellular domain that provides docking sites for downstream signaling molecules. Following activation by ligand, interacts with the PI3-kinase subunit PIK3R1, PLCG1, SRC, GRB2, STAT3 or the adapter GAB1. Recruitment of these downstream effectors by MET leads to the activation of several signaling cascades including the RAS-ERK, PI3 kinase-AKT, or PLCgamma-PKC. The RAS-ERK activation is associated with the morphogenetic effects while PI3K/AKT coordinates prosurvival effects. During embryonic development, MET signaling plays a role in gastrulation, development and migration of muscles and neuronal precursors, angiogenesis and kidney formation. In adults, participates in wound healing as well as organ regeneration and tissue remodeling. Also promotes differentiation and proliferation of hematopoietic cells. Its function is as follows. (Microbial infection) Acts as a receptor for Listeria monocytogenes internalin InlB, mediating entry of the pathogen into cells. The chain is Hepatocyte growth factor receptor (MET) from Chlorocebus aethiops (Green monkey).